The following is a 288-amino-acid chain: Light-independent protochlorophyllide reductase iron-sulfur ATP-binding protein (288 aa).

Residues 12–17 (GIGKST) and lysine 41 each bind ATP. Serine 16 serves as a coordination point for Mg(2+). 2 residues coordinate [4Fe-4S] cluster: cysteine 97 and cysteine 131. 182–183 (NR) is an ATP binding site.

Belongs to the NifH/BchL/ChlL family. In terms of assembly, homodimer. Protochlorophyllide reductase is composed of three subunits; ChlL, ChlN and ChlB. It depends on [4Fe-4S] cluster as a cofactor.

It catalyses the reaction chlorophyllide a + oxidized 2[4Fe-4S]-[ferredoxin] + 2 ADP + 2 phosphate = protochlorophyllide a + reduced 2[4Fe-4S]-[ferredoxin] + 2 ATP + 2 H2O. The protein operates within porphyrin-containing compound metabolism; chlorophyll biosynthesis (light-independent). In terms of biological role, component of the dark-operative protochlorophyllide reductase (DPOR) that uses Mg-ATP and reduced ferredoxin to reduce ring D of protochlorophyllide (Pchlide) to form chlorophyllide a (Chlide). This reaction is light-independent. The L component serves as a unique electron donor to the NB-component of the complex, and binds Mg-ATP. In Synechocystis sp. (strain ATCC 27184 / PCC 6803 / Kazusa), this protein is Light-independent protochlorophyllide reductase iron-sulfur ATP-binding protein.